Reading from the N-terminus, the 580-residue chain is Trafficking protein particle complex subunit 14 (580 aa).

Disordered regions lie at residues 95 to 134 (GSAG…TSGG) and 480 to 533 (VSHP…RSGS). Residues 105–116 (PGGGDPGGGGLF) show a composition bias toward gly residues. A Phosphoserine modification is found at Ser-491. A compositionally biased stretch (low complexity) spans 492–502 (RKSSPSSPAVR). The segment covering 512-525 (LGRSQSFSHQQPSR) has biased composition (polar residues). Ser-517 carries the phosphoserine modification. Thr-541 carries the phosphothreonine modification. The residue at position 546 (Ser-546) is a Phosphoserine.

Component of the multisubunit TRAPP II complex, which includes at least TRAPPC1, TRAPPC2, TRAPPC2L, TRAPPC3, TRAPPC4, TRAPPC5, TRAPPC6A/B, TRAPPC9, TRAPPC10 and TRAPPC14. TRAPPC9, TRAPPC10 and TRAPPC14 are specific subunits of the TRAPP II complex. Interacts with alpha-tubulin during mitosis. Interacts with RAB3IP (via the N-terminal region); this interaction mediates RAB3IP association with the TRAPP II complex. Interacts with TRAPPC10. Interacts with FBF1.

The protein localises to the cytoplasm. It localises to the cytoskeleton. It is found in the spindle. Its subcellular location is the vesicle. The protein resides in the midbody. Its function is as follows. Specific subunit of the TRAPP (transport protein particle) II complex, a highly conserved vesicle tethering complex that functions in late Golgi trafficking as a membrane tether. TRAPPC14 is dispensable for TRAPPII complex integrity but mediates RAB3IP preciliary vesicle trafficking to the mother centriole during ciliogenesis. Modulates YAP1 activity as transcriptional regulator. The chain is Trafficking protein particle complex subunit 14 from Mus musculus (Mouse).